A 372-amino-acid polypeptide reads, in one-letter code: Pristinol synthase (372 aa).

Over residues 1-12 the composition is skewed to basic and acidic residues; the sequence is MAHETTSGRRLP. The segment at 1 to 23 is disordered; it reads MAHETTSGRRLPDPTSPSDPTRR. The Mg(2+) site is built by Asp-100 and Asp-104. A DDXXD motif motif is present at residues 100 to 104; it reads DDQFD. Residue Arg-197 participates in substrate binding. 2 residues coordinate Mg(2+): Asn-243 and Ser-247. Residue Lys-250 coordinates substrate. Glu-251 provides a ligand contact to Mg(2+). A substrate-binding site is contributed by 337–338; it reads RY. Residues 349-372 are disordered; sequence GRRRPWDGLTTATGTASPRHPRRA.

This sequence belongs to the terpene synthase family. Mg(2+) serves as cofactor.

The catalysed reaction is (2E,6E)-farnesyl diphosphate + H2O = (+)-(2S,3R,9R)-pristinol + diphosphate. Its pathway is secondary metabolite biosynthesis; terpenoid biosynthesis. Catalyzes the conversion of (2E,6E)-farnesyl diphosphate (FPP) to yield a new 5-8 bicyclic (pristinane) sesquiterpenol (+)-(2S,3R,9R)-pristinol via a 1,11-cyclization, which requires the abstraction of the pyrophosphate from FPP to yield the humulyl cation. The only accepted substrate is farnesyl diphosphate (FPP). The sequence is that of Pristinol synthase from Streptomyces pristinaespiralis (strain ATCC 25486 / DSM 40338 / CBS 914.69 / JCM 4507 / KCC S-0507 / NBRC 13074 / NRRL 2958 / 5647).